The sequence spans 353 residues: Probable cytochrome c oxidase subunit 2 (353 aa).

The N-terminal stretch at 1-42 is a signal peptide; that stretch reads MTARELVCSQRVGQGLSRRLRPLVLAVTLGVLVVTLSGCSWS. Helical transmembrane passes span 63-83 and 110-130; these read LWIG…GLIF and LVLT…TVIV. Cu cation is bound by residues His246, Cys287, Cys291, and His295.

This sequence belongs to the cytochrome c oxidase subunit 2 family. The cofactor is Cu cation. Requires heme as cofactor.

It is found in the cell membrane. It catalyses the reaction 4 Fe(II)-[cytochrome c] + O2 + 8 H(+)(in) = 4 Fe(III)-[cytochrome c] + 2 H2O + 4 H(+)(out). In terms of biological role, subunits I and II form the functional core of the enzyme complex. Electrons originating in cytochrome c are transferred via heme a and Cu(A) to the binuclear center formed by heme a3 and Cu(B). The chain is Probable cytochrome c oxidase subunit 2 (ctaC) from Mycobacterium leprae (strain TN).